The following is a 450-amino-acid chain: Equilibrative nucleotide transporter 1 (450 aa).

The next 11 membrane-spanning stretches (helical) occupy residues 63 to 83 (FAYI…NAFI), 101 to 121 (IFAV…VVFY), 133 to 153 (LGLL…LVYV), 168 to 188 (AAVA…IGVA), 196 to 216 (MQAV…LRIL), 234 to 254 (LYFA…NVAH), 300 to 320 (HGFG…GYIT), 334 to 354 (ILLI…TAVF), 361 to 381 (IAVG…GCLH), 394 to 414 (ILTC…MILA), and 430 to 450 (TVMF…FWVI).

Belongs to the SLC29A/ENT transporter (TC 2.A.57) family. In terms of tissue distribution, in young seedlings, expressed in root elongation zone, root cortex, root-hair, at the transition to the shoot and cotyledons. Expressed in hydathodes of fully developed leaves and pollen.

It is found in the vacuole membrane. Nucleoside transporter involved in adenosine transport and required for nucleotide metabolism which influences growth and pollen germination. Has high affinity for adenosine when expressed in a heterologous system (yeast). The polypeptide is Equilibrative nucleotide transporter 1 (ENT1) (Arabidopsis thaliana (Mouse-ear cress)).